The primary structure comprises 229 residues: Clathrin light chain B (229 aa).

2 stretches are compositionally biased toward low complexity: residues 1 to 17 (MAEDFGFFSSSESGAPE) and 45 to 58 (GAPAASQVASAQPG). Positions 1–80 (MAEDFGFFSS…TVNGDVFQEA (80 aa)) are disordered. Phosphoserine occurs at positions 11 and 13. The involved in binding clathrin heavy chain stretch occupies residues 93 to 155 (ADRLTQEPES…QVEKNKINNR (63 aa)). Thr-187 is subject to Phosphothreonine. A disulfide bond links Cys-199 and Cys-209. Lys-204 is modified (N6-acetyllysine). At Ser-217 the chain carries Phosphoserine.

Belongs to the clathrin light chain family. Clathrin coats are formed from molecules containing 3 heavy chains and 3 light chains. Interacts (via N-terminus) with HIP1. Interacts with HIP1R.

The protein resides in the cytoplasmic vesicle membrane. Its subcellular location is the membrane. The protein localises to the coated pit. Clathrin is the major protein of the polyhedral coat of coated pits and vesicles. The sequence is that of Clathrin light chain B (Cltb) from Rattus norvegicus (Rat).